The following is a 942-amino-acid chain: Serine/threonine-protein kinase ATG1 (942 aa).

The region spanning 11 to 312 (YVVEKEIGKG…FEEFFNNKIV (302 aa)) is the Protein kinase domain. Residues 17–25 (IGKGSFATV) and Lys-41 each bind ATP. The active-site Proton acceptor is the Asp-159. The segment covering 435 to 452 (NSSRVNKLDKSNLSGKSD) has biased composition (polar residues). Disordered stretches follow at residues 435–454 (NSSR…SDSS), 505–529 (QPHN…SRRA), and 817–836 (NSKP…NDSN). Positions 515-529 (RAPSTTSGGTSSRRA) are enriched in low complexity. The span at 819–834 (KPGTHNQSPKSKISND) shows a compositional bias: polar residues.

The protein belongs to the protein kinase superfamily. Ser/Thr protein kinase family. APG1/unc-51/ULK1 subfamily. As to quaternary structure, homodimer. Forms a ternary complex with ATG13 and ATG17.

Its subcellular location is the cytoplasm. It is found in the preautophagosomal structure membrane. It catalyses the reaction L-seryl-[protein] + ATP = O-phospho-L-seryl-[protein] + ADP + H(+). It carries out the reaction L-threonyl-[protein] + ATP = O-phospho-L-threonyl-[protein] + ADP + H(+). Its function is as follows. Serine/threonine protein kinase involved in the cytoplasm to vacuole transport (Cvt) and found to be essential in autophagy, where it is required for the formation of autophagosomes. Involved in the clearance of protein aggregates which cannot be efficiently cleared by the proteasome. Required for selective autophagic degradation of the nucleus (nucleophagy) as well as for mitophagy which contributes to regulate mitochondrial quantity and quality by eliminating the mitochondria to a basal level to fulfill cellular energy requirements and preventing excess ROS production. Also involved in endoplasmic reticulum-specific autophagic process, in selective removal of ER-associated degradation (ERAD) substrates. Plays a key role in ATG9 and ATG23 cycling through the pre-autophagosomal structure and is necessary to promote ATG18 binding to ATG9 through phosphorylation of ATG9. Catalyzes phosphorylation of ATG4, decreasing the interaction between ATG4 and ATG8 and impairing deconjugation of PE-conjugated forms of ATG8. Contributes to virulence by conferring resistance to unstable nutrient environments and immune defense of hosts. The protein is Serine/threonine-protein kinase ATG1 of Candida glabrata (strain ATCC 2001 / BCRC 20586 / JCM 3761 / NBRC 0622 / NRRL Y-65 / CBS 138) (Yeast).